A 265-amino-acid polypeptide reads, in one-letter code: Cell division protein FtsQ (265 aa).

Residues 1–13 (MAGATTAKGGARR) show a composition bias toward low complexity. The disordered stretch occupies residues 1-25 (MAGATTAKGGARRTPPPGPPPPALK). Over 1–35 (MAGATTAKGGARRTPPPGPPPPALKARRRLRLPRR) the chain is Cytoplasmic. The segment covering 14–23 (TPPPGPPPPA) has biased composition (pro residues). The helical transmembrane segment at 36–58 (RTLLVTGVATALLGSGVTWLLYG) threads the bilayer. Over 59-265 (SSWLRVEQVA…APTAPAVTHS (207 aa)) the chain is Extracellular. A POTRA domain is found at 62-131 (LRVEQVAVSG…DTIAVRVTER (70 aa)).

It belongs to the FtsQ/DivIB family. FtsQ subfamily.

Its subcellular location is the cell membrane. Its function is as follows. Essential cell division protein. This chain is Cell division protein FtsQ, found in Streptomyces bingchenggensis (strain BCW-1).